The primary structure comprises 298 residues: Tyrosine recombinase XerD (298 aa).

The Core-binding (CB) domain occupies 3–88; sequence TLEHPLIDRF…GLRGFYRYCL (86 aa). Positions 109 to 292 constitute a Tyr recombinase domain; the sequence is PLPKSLSEAD…ARARLQDLHA (184 aa). Active-site residues include Arg149, Lys173, His244, Arg247, and His270. Tyr279 functions as the O-(3'-phospho-DNA)-tyrosine intermediate in the catalytic mechanism.

Belongs to the 'phage' integrase family. XerD subfamily. Forms a cyclic heterotetrameric complex composed of two molecules of XerC and two molecules of XerD.

The protein localises to the cytoplasm. Functionally, site-specific tyrosine recombinase, which acts by catalyzing the cutting and rejoining of the recombining DNA molecules. The XerC-XerD complex is essential to convert dimers of the bacterial chromosome into monomers to permit their segregation at cell division. It also contributes to the segregational stability of plasmids. The chain is Tyrosine recombinase XerD from Pseudomonas aeruginosa (strain ATCC 15692 / DSM 22644 / CIP 104116 / JCM 14847 / LMG 12228 / 1C / PRS 101 / PAO1).